A 330-amino-acid chain; its full sequence is 2-oxoisovalerate dehydrogenase subunit alpha (330 aa).

Residues F44, Y73, 107-110, and S123 contribute to the substrate site; that span reads MPGH. Residue 72–74 participates in thiamine diphosphate binding; that stretch reads YYR. Thiamine diphosphate-binding positions include 123–125, 153–159, 183–187, and H252; these read SPV, GEGSSNQ, and NKYAI. The Mg(2+) site is built by E154, N183, and Y185. Residues 249 to 272 are disordered; sequence LTPHSSDDDDSSYRGREEVEEAKK. Basic and acidic residues predominate over residues 259-272; the sequence is SSYRGREEVEEAKK.

It belongs to the BCKDHA family. In terms of assembly, heterotetramer of two alpha and two beta chains. Directly associated with ODBB in the E1 complex. It depends on thiamine diphosphate as a cofactor.

It carries out the reaction N(6)-[(R)-lipoyl]-L-lysyl-[protein] + 3-methyl-2-oxobutanoate + H(+) = N(6)-[(R)-S(8)-2-methylpropanoyldihydrolipoyl]-L-lysyl-[protein] + CO2. Functionally, the branched-chain alpha-keto dehydrogenase complex catalyzes the overall conversion of alpha-keto acids to acyl-CoA and CO(2). It contains multiple copies of three enzymatic components: branched-chain alpha-keto acid decarboxylase (E1), lipoamide acyltransferase (E2) and lipoamide dehydrogenase (E3). The sequence is that of 2-oxoisovalerate dehydrogenase subunit alpha (bfmBAA) from Bacillus subtilis (strain 168).